Here is a 190-residue protein sequence, read N- to C-terminus: MIKIERQTKETDIVVELNVDGKGKSDIDTGIGFFDHMLESFAKHARFDVKVVCKGDIHVDFHHSVEDVGIVLGQAFYQSVFPVHNKERFGDAVIVMDESAVECAIDLSNRPFLVYEVDIDGTIGQFDAELIEEFFRAFVFNARITAHIIQKRGKNRHHLAEASFKALAVALRRALAEDKRAGMPSTKGVL.

The protein belongs to the imidazoleglycerol-phosphate dehydratase family.

The protein resides in the cytoplasm. It catalyses the reaction D-erythro-1-(imidazol-4-yl)glycerol 3-phosphate = 3-(imidazol-4-yl)-2-oxopropyl phosphate + H2O. Its pathway is amino-acid biosynthesis; L-histidine biosynthesis; L-histidine from 5-phospho-alpha-D-ribose 1-diphosphate: step 6/9. The sequence is that of Imidazoleglycerol-phosphate dehydratase from Nitratiruptor sp. (strain SB155-2).